Here is a 441-residue protein sequence, read N- to C-terminus: GTPase Der (441 aa).

EngA-type G domains lie at 2–164 (QKVA…PADE) and 173–343 (IRIS…EKWQ). Residues 8-15 (GRPNVGKS), 55-59 (DTGGL), 116-119 (NKID), 179-186 (GRPNVGKS), 226-230 (DTAGI), and 288-291 (NKWD) each bind GTP. One can recognise a KH-like domain in the interval 344–428 (SRIPTAELNR…PVRLKWKEKG (85 aa)).

Belongs to the TRAFAC class TrmE-Era-EngA-EngB-Septin-like GTPase superfamily. EngA (Der) GTPase family. As to quaternary structure, associates with the 50S ribosomal subunit.

In terms of biological role, GTPase that plays an essential role in the late steps of ribosome biogenesis. This chain is GTPase Der, found in Deinococcus geothermalis (strain DSM 11300 / CIP 105573 / AG-3a).